The following is a 96-amino-acid chain: Aspartyl/glutamyl-tRNA(Asn/Gln) amidotransferase subunit C (96 aa).

This sequence belongs to the GatC family. As to quaternary structure, heterotrimer of A, B and C subunits.

The enzyme catalyses L-glutamyl-tRNA(Gln) + L-glutamine + ATP + H2O = L-glutaminyl-tRNA(Gln) + L-glutamate + ADP + phosphate + H(+). It catalyses the reaction L-aspartyl-tRNA(Asn) + L-glutamine + ATP + H2O = L-asparaginyl-tRNA(Asn) + L-glutamate + ADP + phosphate + 2 H(+). In terms of biological role, allows the formation of correctly charged Asn-tRNA(Asn) or Gln-tRNA(Gln) through the transamidation of misacylated Asp-tRNA(Asn) or Glu-tRNA(Gln) in organisms which lack either or both of asparaginyl-tRNA or glutaminyl-tRNA synthetases. The reaction takes place in the presence of glutamine and ATP through an activated phospho-Asp-tRNA(Asn) or phospho-Glu-tRNA(Gln). The chain is Aspartyl/glutamyl-tRNA(Asn/Gln) amidotransferase subunit C from Chloroflexus aggregans (strain MD-66 / DSM 9485).